Reading from the N-terminus, the 268-residue chain is GTP cyclohydrolase FolE2 (268 aa).

The protein belongs to the GTP cyclohydrolase IV family.

The catalysed reaction is GTP + H2O = 7,8-dihydroneopterin 3'-triphosphate + formate + H(+). Its pathway is cofactor biosynthesis; 7,8-dihydroneopterin triphosphate biosynthesis; 7,8-dihydroneopterin triphosphate from GTP: step 1/1. Its function is as follows. Converts GTP to 7,8-dihydroneopterin triphosphate. This is GTP cyclohydrolase FolE2 from Methylococcus capsulatus (strain ATCC 33009 / NCIMB 11132 / Bath).